The primary structure comprises 146 residues: Acidic phospholipase A2 2 (146 aa).

The N-terminal stretch at 1-21 (MTPAHLLILAAVCVSPLGASS) is a signal peptide. A propeptide spanning residues 22-27 (SRPMPL) is cleaved from the precursor. 7 disulfides stabilise this stretch: cysteine 38-cysteine 98, cysteine 53-cysteine 145, cysteine 55-cysteine 71, cysteine 70-cysteine 126, cysteine 77-cysteine 119, cysteine 87-cysteine 112, and cysteine 105-cysteine 117. 3 residues coordinate Ca(2+): tyrosine 54, glycine 56, and glycine 58. Histidine 74 is a catalytic residue. Aspartate 75 contributes to the Ca(2+) binding site. Aspartate 120 is an active-site residue.

This sequence belongs to the phospholipase A2 family. Group I subfamily. D49 sub-subfamily. Ca(2+) serves as cofactor. In terms of tissue distribution, expressed by the venom gland.

It localises to the secreted. It carries out the reaction a 1,2-diacyl-sn-glycero-3-phosphocholine + H2O = a 1-acyl-sn-glycero-3-phosphocholine + a fatty acid + H(+). In terms of biological role, PLA2 catalyzes the calcium-dependent hydrolysis of the 2-acyl groups in 3-sn-phosphoglycerides. The chain is Acidic phospholipase A2 2 from Naja atra (Chinese cobra).